Consider the following 100-residue polypeptide: Replication restart protein PriB (100 aa).

The SSB domain occupies 1–99; sequence MGFNNLVSLA…LRIQNIQEYK (99 aa).

Belongs to the PriB family. Homodimer. Interacts with PriA and DnaT. Component of the replication restart primosome. Primosome assembly occurs via a 'hand-off' mechanism. PriA binds to replication forks, subsequently PriB then DnaT bind; DnaT then displaces ssDNA to generate the helicase loading substrate.

Its function is as follows. Involved in the restart of stalled replication forks, which reloads the replicative helicase on sites other than the origin of replication; the PriA-PriB pathway is the major replication restart pathway. During primosome assembly it facilitates complex formation between PriA and DnaT on DNA; stabilizes PriA on DNA. Stimulates the DNA unwinding activity of PriA helicase. In Neisseria meningitidis serogroup B (strain ATCC BAA-335 / MC58), this protein is Replication restart protein PriB.